Here is a 459-residue protein sequence, read N- to C-terminus: MSQSSASSIFTVSRLNQTVRELLEREMGQIWLTAEISNFSQPASGHWYFTLKDDRAQVRCAMFRNSNRRTTFRPQNGQQVLVRASITLYEPRGDYQLIAESMQPAGDGLLQQQFEQLKQQLAAEGLFDQSHKQPLPSPAKQVGVITSASGAALHDVLHVLQRRDPSLPVIIYPTSVQGVDAPLQIVRAIQLANLRAECDVLIVGRGGGSLEDLWSFNDERVARAIFNSHIPIVSAVGHETDVTIADFVADLRAPTPSAAAELVSRNQIELVRQIQGQQQRMEMAMDYYLAQRTQQFTRLEHRLQQQHPHLRLARQQTLLLKLQRRLEESAQTQIRLLSKRTERLQQRLQQVQPQGQIHRYNQRVQQQEYRLRQAVERQLNGYRQRFGIACSQLEAVSPLATLARGYSVTQTPAGALLKTTKQVQAGDKLTTRLQDGWVESEITQVTVAKKSRQKKVVTQ.

The protein belongs to the XseA family. Heterooligomer composed of large and small subunits.

Its subcellular location is the cytoplasm. The catalysed reaction is Exonucleolytic cleavage in either 5'- to 3'- or 3'- to 5'-direction to yield nucleoside 5'-phosphates.. In terms of biological role, bidirectionally degrades single-stranded DNA into large acid-insoluble oligonucleotides, which are then degraded further into small acid-soluble oligonucleotides. The polypeptide is Exodeoxyribonuclease 7 large subunit (Yersinia pseudotuberculosis serotype O:3 (strain YPIII)).